The sequence spans 410 residues: Histone-lysine N-methyltransferase SUV39H2 (410 aa).

A Chromo domain is found at 47-105; it reads YEVEYLCDYKVVKDMEYYLVKWKGWPDSTNTWEPLQNLKCPLLLQQFSNDKHNYLSQVK. The 59-residue stretch at 189 to 247 folds into the Pre-SET domain; that stretch reads FGCSCTDCFFQKCCPAEAGVLLAYNKNQQIKIPPGTPIYECNSRCQCGPDCPNRIVQKG. C191, C193, C196, C201, C202, C229, C233, C235, and C239 together coordinate Zn(2+). An SET domain is found at 250–373; sequence YSLCIFRTSN…AGEELTFDYQ (124 aa). Residues 261 to 263, Y304, and 330 to 331 contribute to the S-adenosyl-L-methionine site; these read RGW and NH. Position 333 (C333) interacts with Zn(2+). Phosphoserine is present on residues S381, S384, and S388. Positions 394–410 constitute a Post-SET domain; that stretch reads VRTVCKCGAVTCRGYLN. Residues C398, C400, and C405 each coordinate Zn(2+).

It belongs to the class V-like SAM-binding methyltransferase superfamily. Histone-lysine methyltransferase family. Suvar3-9 subfamily. In terms of assembly, interacts with SMAD5. The large PER complex involved in the histone methylation is composed of at least PER2, CBX3, TRIM28, SUV39H1 and/or SUV39H2; CBX3 mediates the formation of the complex. In terms of processing, ubiquitinated by the DCX(DCAF13) E3 ubiquitin ligase complex, leading to its degradation.

It is found in the nucleus. The protein localises to the chromosome. It localises to the centromere. The enzyme catalyses L-lysyl(9)-[histone H3] + 3 S-adenosyl-L-methionine = N(6),N(6),N(6)-trimethyl-L-lysyl(9)-[histone H3] + 3 S-adenosyl-L-homocysteine + 3 H(+). Histone methyltransferase that specifically trimethylates 'Lys-9' of histone H3 using monomethylated H3 'Lys-9' as substrate. H3 'Lys-9' trimethylation represents a specific tag for epigenetic transcriptional repression by recruiting HP1 (CBX1, CBX3 and/or CBX5) proteins to methylated histones. Mainly functions in heterochromatin regions, thereby playing a central role in the establishment of constitutive heterochromatin at pericentric and telomere regions. H3 'Lys-9' trimethylation is also required to direct DNA methylation at pericentric repeats. SUV39H1 is targeted to histone H3 via its interaction with RB1 and is involved in many processes, such as cell cycle regulation, transcriptional repression and regulation of telomere length. May participate in regulation of higher-order chromatin organization during spermatogenesis. Recruited by the large PER complex to the E-box elements of the circadian target genes such as PER2 itself or PER1, contributes to the conversion of local chromatin to a heterochromatin-like repressive state through H3 'Lys-9' trimethylation. The polypeptide is Histone-lysine N-methyltransferase SUV39H2 (SUV39H2) (Macaca fascicularis (Crab-eating macaque)).